The primary structure comprises 244 residues: Mitochondrial import inner membrane translocase subunit Tim21 (244 aa).

The transit peptide at 1–18 directs the protein to the mitochondrion; it reads MICTLLRAVRCTERLHGC. Residues 69–89 form a disordered region; that stretch reads VRSPQSAKEDGSKQVSVHRSQ. A helical membrane pass occupies residues 108–128; it reads FTYLIVVLIGISITGGLFYTI.

Belongs to the TIM21 family. Component of the TIM23 complex. Component of the MITRAC (mitochondrial translation regulation assembly intermediate of cytochrome c oxidase complex) complex, the core components of this complex being COA3/MITRAC12 and COX14. Interacts with COA3 and MT-CO1/COX1.

The protein resides in the mitochondrion membrane. Participates in the translocation of transit peptide-containing proteins across the mitochondrial inner membrane. Also required for assembly of mitochondrial respiratory chain complex I and complex IV as component of the MITRAC (mitochondrial translation regulation assembly intermediate of cytochrome c oxidase complex) complex. Probably shuttles between the presequence translocase and respiratory-chain assembly intermediates in a process that promotes incorporation of early nuclear-encoded subunits into these complexes. This Bos taurus (Bovine) protein is Mitochondrial import inner membrane translocase subunit Tim21 (TIMM21).